The following is a 116-amino-acid chain: U11-theraphotoxin-Hhn1b (116 aa).

An N-terminal signal peptide occupies residues 1-21 (MNTVRVTFLLVFVLAVSLGQA). A propeptide spanning residues 22–74 (DKDENRMEMQEKTEQGKSYLDFAENLLLQKLEELEAKLLEEDSEESRNSRQKR) is cleaved from the precursor. Over residues 60 to 69 (LEEDSEESRN) the composition is skewed to basic and acidic residues. Residues 60–83 (LEEDSEESRNSRQKRCIGEGVPCD) are disordered. 3 disulfide bridges follow: Cys75–Cys90, Cys82–Cys95, and Cys89–Cys110.

It belongs to the neurotoxin 14 (magi-1) family. 01 (HNTX-16) subfamily. As to expression, expressed by the venom gland.

The protein resides in the secreted. In terms of biological role, probable ion channel inhibitor. In Cyriopagopus hainanus (Chinese bird spider), this protein is U11-theraphotoxin-Hhn1b.